We begin with the raw amino-acid sequence, 675 residues long: DNA ligase (675 aa).

NAD(+) is bound by residues 33–37, 82–83, and glutamate 115; these read DAEYD and SL. Catalysis depends on lysine 117, which acts as the N6-AMP-lysine intermediate. The NAD(+) site is built by arginine 138, glutamate 175, lysine 293, and lysine 317. Zn(2+)-binding residues include cysteine 411, cysteine 414, cysteine 429, and cysteine 435. The region spanning 594 to 675 is the BRCT domain; sequence IADNPLKDKT…LIGYFTTIVS (82 aa).

The protein belongs to the NAD-dependent DNA ligase family. LigA subfamily. It depends on Mg(2+) as a cofactor. Mn(2+) is required as a cofactor.

The enzyme catalyses NAD(+) + (deoxyribonucleotide)n-3'-hydroxyl + 5'-phospho-(deoxyribonucleotide)m = (deoxyribonucleotide)n+m + AMP + beta-nicotinamide D-nucleotide.. Functionally, DNA ligase that catalyzes the formation of phosphodiester linkages between 5'-phosphoryl and 3'-hydroxyl groups in double-stranded DNA using NAD as a coenzyme and as the energy source for the reaction. It is essential for DNA replication and repair of damaged DNA. The chain is DNA ligase from Glaesserella parasuis serovar 5 (strain SH0165) (Haemophilus parasuis).